The sequence spans 209 residues: Uracil phosphoribosyltransferase (209 aa).

5-phospho-alpha-D-ribose 1-diphosphate contacts are provided by residues Arg79, Arg104, and 131–139 (DPMLATGGS). Uracil is bound by residues Ile194 and 199 to 201 (GDA). Residue Asp200 participates in 5-phospho-alpha-D-ribose 1-diphosphate binding.

Belongs to the UPRTase family. The cofactor is Mg(2+).

The enzyme catalyses UMP + diphosphate = 5-phospho-alpha-D-ribose 1-diphosphate + uracil. It functions in the pathway pyrimidine metabolism; UMP biosynthesis via salvage pathway; UMP from uracil: step 1/1. Allosterically activated by GTP. Its function is as follows. Catalyzes the conversion of uracil and 5-phospho-alpha-D-ribose 1-diphosphate (PRPP) to UMP and diphosphate. In Clostridium kluyveri (strain NBRC 12016), this protein is Uracil phosphoribosyltransferase.